A 441-amino-acid polypeptide reads, in one-letter code: Xaa-Pro dipeptidase (441 aa).

Positions 244, 255, 336, 381, and 420 each coordinate Mn(2+).

This sequence belongs to the peptidase M24B family. Bacterial-type prolidase subfamily. It depends on Mn(2+) as a cofactor.

It carries out the reaction Xaa-L-Pro dipeptide + H2O = an L-alpha-amino acid + L-proline. Splits dipeptides with a prolyl residue in the C-terminal position. In Xanthomonas oryzae pv. oryzae (strain MAFF 311018), this protein is Xaa-Pro dipeptidase.